The sequence spans 523 residues: UDP-glucuronosyltransferase 3A2 (523 aa).

The signal sequence occupies residues 1 to 22 (MAGQRVLLLVGFLLPGVLLSEA). The Extracellular portion of the chain corresponds to 23-483 (AKILTISTVG…YVFQQPWHEQ (461 aa)). Asn-52 carries an N-linked (GlcNAc...) asparagine glycan. The helical transmembrane segment at 484–504 (YLLDVFVFLLGLTLGTLWLCG) threads the bilayer. At 505–523 (KLLGMAVWWLRGARKVKET) the chain is on the cytoplasmic side.

Belongs to the UDP-glycosyltransferase family.

It localises to the membrane. It catalyses the reaction glucuronate acceptor + UDP-alpha-D-glucuronate = acceptor beta-D-glucuronoside + UDP + H(+). Functionally, UDP-glucuronosyltransferases catalyze phase II biotransformation reactions in which lipophilic substrates are conjugated with glucuronic acid to increase water solubility and enhance excretion. They are of major importance in the conjugation and subsequent elimination of potentially toxic xenobiotics and endogenous compounds. The chain is UDP-glucuronosyltransferase 3A2 (UGT3A2) from Homo sapiens (Human).